Consider the following 102-residue polypeptide: Small ribosomal subunit protein uS10 (102 aa).

The protein belongs to the universal ribosomal protein uS10 family. Part of the 30S ribosomal subunit.

In terms of biological role, involved in the binding of tRNA to the ribosomes. In Streptococcus pneumoniae (strain Taiwan19F-14), this protein is Small ribosomal subunit protein uS10.